We begin with the raw amino-acid sequence, 706 residues long: ATP-dependent zinc metalloprotease FtsH (706 aa).

Polar residues predominate over residues 1–17 (MAKNSLKPSNPYNSEPE). Positions 1-20 (MAKNSLKPSNPYNSEPETPQ) are disordered. At 1–24 (MAKNSLKPSNPYNSEPETPQPRPK) the chain is on the cytoplasmic side. A helical transmembrane segment spans residues 25-45 (LPMIYYVVVIALLIGLQLAFF). The Periplasmic portion of the chain corresponds to 46-142 (WSGSSREIPY…RYEGSPGTTW (97 aa)). Residues 88–111 (GLPKQEEGNDTTRKLLPGAKTPEN) are disordered. A compositionally biased stretch (basic and acidic residues) spans 91–100 (KQEEGNDTTR). Residues 143 to 163 (ISELIQWVLPFALLFGLYFFI) form a helical membrane-spanning segment. Topologically, residues 164-706 (FRRMGAGGPG…LRQSRNVSDN (543 aa)) are cytoplasmic. 239–246 (GPPGTGKT) lines the ATP pocket. Histidine 462 provides a ligand contact to Zn(2+). The active site involves glutamate 463. 2 residues coordinate Zn(2+): histidine 466 and aspartate 539. The segment at 641 to 681 (RPGGQEEDSGEVDCSKKSAENGMVAHEPETTADAESTEKVG) is disordered.

In the central section; belongs to the AAA ATPase family. It in the C-terminal section; belongs to the peptidase M41 family. As to quaternary structure, homohexamer. Zn(2+) serves as cofactor.

It is found in the cell inner membrane. Acts as a processive, ATP-dependent zinc metallopeptidase for both cytoplasmic and membrane proteins. Plays a role in the quality control of integral membrane proteins. In Chlorobium luteolum (strain DSM 273 / BCRC 81028 / 2530) (Pelodictyon luteolum), this protein is ATP-dependent zinc metalloprotease FtsH.